The primary structure comprises 435 residues: Serine--tRNA ligase (435 aa).

L-serine is bound at residue 240-242 (TAE). ATP is bound at residue 271-273 (RSE). Glu294 is a binding site for L-serine. 358–361 (EISS) contacts ATP. Position 393 (Ser393) interacts with L-serine.

This sequence belongs to the class-II aminoacyl-tRNA synthetase family. Type-1 seryl-tRNA synthetase subfamily. Homodimer. The tRNA molecule binds across the dimer.

The protein resides in the cytoplasm. It carries out the reaction tRNA(Ser) + L-serine + ATP = L-seryl-tRNA(Ser) + AMP + diphosphate + H(+). The catalysed reaction is tRNA(Sec) + L-serine + ATP = L-seryl-tRNA(Sec) + AMP + diphosphate + H(+). It functions in the pathway aminoacyl-tRNA biosynthesis; selenocysteinyl-tRNA(Sec) biosynthesis; L-seryl-tRNA(Sec) from L-serine and tRNA(Sec): step 1/1. Functionally, catalyzes the attachment of serine to tRNA(Ser). Is also able to aminoacylate tRNA(Sec) with serine, to form the misacylated tRNA L-seryl-tRNA(Sec), which will be further converted into selenocysteinyl-tRNA(Sec). This chain is Serine--tRNA ligase, found in Cupriavidus metallidurans (strain ATCC 43123 / DSM 2839 / NBRC 102507 / CH34) (Ralstonia metallidurans).